Consider the following 202-residue polypeptide: MIEYLKGAIVGLTPTNLVIECAGVGYDVNVSLTTYSAYQGKKEGLIWITQLIREDAHLLYGFSTKEERTLFGQLTSVSGVGPTTAQLILSSYAPQELAALITTGQADALKAVKGIGLKTAQRIIVDLKGKIQLETSSDEILSARTAVGDAALNTIASGEEAISALKMLGFADPAIRKAVKSILSEDSSLAVEDIIKRALRML.

Residues 1–63 (MIEYLKGAIV…EDAHLLYGFS (63 aa)) form a domain I region. The domain II stretch occupies residues 64–142 (TKEERTLFGQ…LETSSDEILS (79 aa)). A flexible linker region spans residues 143 to 153 (ARTAVGDAALN). Residues 153 to 202 (NTIASGEEAISALKMLGFADPAIRKAVKSILSEDSSLAVEDIIKRALRML) are domain III.

Belongs to the RuvA family. In terms of assembly, homotetramer. Forms an RuvA(8)-RuvB(12)-Holliday junction (HJ) complex. HJ DNA is sandwiched between 2 RuvA tetramers; dsDNA enters through RuvA and exits via RuvB. An RuvB hexamer assembles on each DNA strand where it exits the tetramer. Each RuvB hexamer is contacted by two RuvA subunits (via domain III) on 2 adjacent RuvB subunits; this complex drives branch migration. In the full resolvosome a probable DNA-RuvA(4)-RuvB(12)-RuvC(2) complex forms which resolves the HJ.

Its subcellular location is the cytoplasm. In terms of biological role, the RuvA-RuvB-RuvC complex processes Holliday junction (HJ) DNA during genetic recombination and DNA repair, while the RuvA-RuvB complex plays an important role in the rescue of blocked DNA replication forks via replication fork reversal (RFR). RuvA specifically binds to HJ cruciform DNA, conferring on it an open structure. The RuvB hexamer acts as an ATP-dependent pump, pulling dsDNA into and through the RuvAB complex. HJ branch migration allows RuvC to scan DNA until it finds its consensus sequence, where it cleaves and resolves the cruciform DNA. The protein is Holliday junction branch migration complex subunit RuvA of Porphyromonas gingivalis (strain ATCC BAA-308 / W83).